The chain runs to 323 residues: MLRGKATVAAAQPRRTFVLAGMLSLGQLVIGREARLADAMARGDLHNKNEDYQAKQLQELEARLQGLRNTRPSAPRYEGHVPLWWHEKALLFGISGLRSFFHPENGMNIVQLGEAAAIPCFLESLRRTMLSDATGRRILREQPNISEPDLDMDKLAQLPTNTLGHTFYRWLRKEGVTPDTRAPVTYIDDPVHAYIFKRYRQCHDFYHAITGLPIIIEGEIAVKALEAANIGVPMAALGALLAPLRLRAAQRERLRNIYLPWAIETGLSAKPLINVYWEELLEHDVDQLRAELGIRVPPDLRLIRQEQLQRRRSFKMKYESFEN.

Residues histidine 203, aspartate 204, histidine 207, and glutamate 219 each coordinate Zn(2+).

The protein belongs to the COQ4 family. Component of a multi-subunit COQ enzyme complex, composed of at least COQ3, COQ4, COQ5, COQ6, COQ7 and COQ9. It depends on Zn(2+) as a cofactor.

The protein localises to the mitochondrion inner membrane. It catalyses the reaction a 4-hydroxy-3-methoxy-5-(all-trans-polyprenyl)benzoate + H(+) = a 2-methoxy-6-(all-trans-polyprenyl)phenol + CO2. The protein operates within cofactor biosynthesis; ubiquinone biosynthesis. In terms of biological role, lyase that catalyzes the C1-decarboxylation of 4-hydroxy-3-methoxy-5-(all-trans-polyprenyl)benzoic acid into 2-methoxy-6-(all-trans-polyprenyl)phenol during ubiquinone biosynthesis. The protein is Ubiquinone biosynthesis protein COQ4, mitochondrial of Eremothecium gossypii (strain ATCC 10895 / CBS 109.51 / FGSC 9923 / NRRL Y-1056) (Yeast).